The chain runs to 248 residues: E3 SUMO-protein ligase NSE2 (248 aa).

Position 1 is an N-acetylmethionine (Met-1). Residues Lys-92 and Lys-109 each participate in a glycyl lysine isopeptide (Lys-Gly) (interchain with G-Cter in SUMO2) cross-link. Ser-118 carries the post-translational modification Phosphoserine. Glycyl lysine isopeptide (Lys-Gly) (interchain with G-Cter in SUMO2) cross-links involve residues Lys-127 and Lys-132. The SP-RING-type zinc finger occupies 156–242 (VDEDMIVTQS…LRRAIESHKK (87 aa)). Cys-187, His-189, Cys-212, and Cys-217 together coordinate Zn(2+).

Belongs to the NSE2 family. As to quaternary structure, component of the SMC5-SMC6 complex which consists at least of SMC5, SMC6, NSMCE2, NSMCE1, NSMCE4A or EID3 and NSMCE3. Post-translationally, sumoylated, possibly via autosumoylation.

It localises to the nucleus. The protein localises to the chromosome. The protein resides in the telomere. Its subcellular location is the PML body. It participates in protein modification; protein sumoylation. In terms of biological role, E3 SUMO-protein ligase component of the SMC5-SMC6 complex, a complex involved in DNA double-strand break repair by homologous recombination. Is not be required for the stability of the complex. The complex may promote sister chromatid homologous recombination by recruiting the SMC1-SMC3 cohesin complex to double-strand breaks. Acts as an E3 ligase mediating SUMO attachment to various proteins such as SMC6L1 and TSNAX, the shelterin complex subunits TERF1, TERF2, TINF2 and TERF2IP, RAD51AP1, and maybe the cohesin components RAD21 and STAG2. Required for recruitment of telomeres to PML nuclear bodies. Required for sister chromatid cohesion during prometaphase and mitotic progression. This chain is E3 SUMO-protein ligase NSE2 (NSMCE2), found in Bos taurus (Bovine).